Reading from the N-terminus, the 320-residue chain is Nicotianamine synthase 1 (320 aa).

The protein belongs to the nicotianamine synthase (NAS)-like family. In shoots and roots.

The enzyme catalyses 3 S-adenosyl-L-methionine = nicotianamine + 3 S-methyl-5'-thioadenosine + 3 H(+). Its function is as follows. Synthesizes nicotianamine, a polyamine which serves as a sensor for the physiological iron status within the plant, and/or might be involved in the transport of iron. The polypeptide is Nicotianamine synthase 1 (NAS1) (Arabidopsis thaliana (Mouse-ear cress)).